The following is a 447-amino-acid chain: Phosphoglucosamine mutase (447 aa).

S103 functions as the Phosphoserine intermediate in the catalytic mechanism. Mg(2+) is bound by residues S103, D242, D244, and D246. S103 is subject to Phosphoserine.

It belongs to the phosphohexose mutase family. The cofactor is Mg(2+). In terms of processing, activated by phosphorylation.

The enzyme catalyses alpha-D-glucosamine 1-phosphate = D-glucosamine 6-phosphate. Its function is as follows. Catalyzes the conversion of glucosamine-6-phosphate to glucosamine-1-phosphate. The polypeptide is Phosphoglucosamine mutase (Paracoccus denitrificans (strain Pd 1222)).